The following is a 171-amino-acid chain: MRALFPGRFQPFHKGHLAVVKWSLERVDELVIVVGSAQESHTLQNPMTAGERVLAIRRALEDEGIDLRKVYIIPVPDILMNSAWVAHVRTYVPPFEAVVTRNPLVKVLFEEAGYEVLEPPPFGREKYVATNIRALMALGDPKWEEMVPRAVAEIIKELGIIRRMRELSKRD.

It belongs to the archaeal NMN adenylyltransferase family.

Its subcellular location is the cytoplasm. It carries out the reaction beta-nicotinamide D-ribonucleotide + ATP + H(+) = diphosphate + NAD(+). Its pathway is cofactor biosynthesis; NAD(+) biosynthesis; NAD(+) from nicotinamide D-ribonucleotide: step 1/1. The polypeptide is Nicotinamide-nucleotide adenylyltransferase (Ignicoccus hospitalis (strain KIN4/I / DSM 18386 / JCM 14125)).